A 228-amino-acid polypeptide reads, in one-letter code: Uracil-DNA glycosylase (228 aa).

The active-site Proton acceptor is the Asp-64.

This sequence belongs to the uracil-DNA glycosylase (UDG) superfamily. UNG family.

Its subcellular location is the cytoplasm. The enzyme catalyses Hydrolyzes single-stranded DNA or mismatched double-stranded DNA and polynucleotides, releasing free uracil.. Functionally, excises uracil residues from the DNA which can arise as a result of misincorporation of dUMP residues by DNA polymerase or due to deamination of cytosine. The polypeptide is Uracil-DNA glycosylase (Yersinia enterocolitica serotype O:8 / biotype 1B (strain NCTC 13174 / 8081)).